A 232-amino-acid chain; its full sequence is Purine nucleoside phosphorylase DeoD-type (232 aa).

Residue His-4 participates in a purine D-ribonucleoside binding. Residues Gly-20, Arg-24, Arg-43, and 87–90 (RIGT) each bind phosphate. A purine D-ribonucleoside is bound by residues 179–181 (EME) and 203–204 (SD). Catalysis depends on Asp-204, which acts as the Proton donor.

The protein belongs to the PNP/UDP phosphorylase family. Homohexamer; trimer of homodimers.

It catalyses the reaction a purine D-ribonucleoside + phosphate = a purine nucleobase + alpha-D-ribose 1-phosphate. The enzyme catalyses a purine 2'-deoxy-D-ribonucleoside + phosphate = a purine nucleobase + 2-deoxy-alpha-D-ribose 1-phosphate. In terms of biological role, catalyzes the reversible phosphorolytic breakdown of the N-glycosidic bond in the beta-(deoxy)ribonucleoside molecules, with the formation of the corresponding free purine bases and pentose-1-phosphate. In Caldanaerobacter subterraneus subsp. tengcongensis (strain DSM 15242 / JCM 11007 / NBRC 100824 / MB4) (Thermoanaerobacter tengcongensis), this protein is Purine nucleoside phosphorylase DeoD-type.